The sequence spans 253 residues: Major prion protein (253 aa).

The N-terminal stretch at 1-22 is a signal peptide; the sequence is MANLGCWMLVLFVATWSDLGLC. The interval 23-38 is interaction with ADGRG6; that stretch reads KKRPKPGGWNTGGSRY. Positions 23 to 230 are interaction with GRB2, ERI3 and SYN1; sequence KKRPKPGGWN…ESQAYYQRGS (208 aa). The segment at 26–108 is disordered; it reads PKPGGWNTGG…WNKPSKPKTN (83 aa). Tandem repeats lie at residues 51-59, 60-67, 68-75, 76-83, and 84-91. The tract at residues 51–91 is 5 X 8 AA tandem repeats of P-H-G-G-G-W-G-Q; the sequence is PQGGGGWGQPHGGGWGQPHGGGWGQPHGGGWGQPHGGGWGQ. The span at 52–95 shows a compositional bias: gly residues; the sequence is QGGGGWGQPHGGGWGQPHGGGWGQPHGGGWGQPHGGGWGQGGGT. Positions 61, 62, 63, 69, 70, 71, 77, 78, 79, 85, 86, and 87 each coordinate Cu(2+). Cys-179 and Cys-214 are joined by a disulfide. Residues Asn-181 and Asn-197 are each glycosylated (N-linked (GlcNAc...) asparagine). Ser-230 carries the GPI-anchor amidated serine lipid modification. Residues 231-253 constitute a propeptide, removed in mature form; sequence SMVLFSSPPVILLISFLIFLIVG.

Belongs to the prion family. Monomer and homodimer. Has a tendency to aggregate into amyloid fibrils containing a cross-beta spine, formed by a steric zipper of superposed beta-strands. Soluble oligomers may represent an intermediate stage on the path to fibril formation. Copper binding may promote oligomerization. Interacts with GRB2, APP, ERI3/PRNPIP and SYN1. Mislocalized cytosolically exposed PrP interacts with MGRN1; this interaction alters MGRN1 subcellular location and causes lysosomal enlargement. Interacts with APP. Interacts with KIAA1191. Interacts with ADGRG6.

It localises to the cell membrane. The protein localises to the golgi apparatus. Its primary physiological function is unclear. May play a role in neuronal development and synaptic plasticity. May be required for neuronal myelin sheath maintenance. May promote myelin homeostasis through acting as an agonist for ADGRG6 receptor. May play a role in iron uptake and iron homeostasis. Soluble oligomers are toxic to cultured neuroblastoma cells and induce apoptosis (in vitro). Association with GPC1 (via its heparan sulfate chains) targets PRNP to lipid rafts. Also provides Cu(2+) or Zn(2+) for the ascorbate-mediated GPC1 deaminase degradation of its heparan sulfate side chains. The protein is Major prion protein (PRNP) of Gorilla gorilla gorilla (Western lowland gorilla).